A 147-amino-acid chain; its full sequence is uncharacterized protein (147 aa).

This is an uncharacterized protein from Bacillus subtilis (strain 168).